Here is a 275-residue protein sequence, read N- to C-terminus: Release factor glutamine methyltransferase (275 aa).

Residues 114 to 118 (GTGSG), aspartate 137, tryptophan 165, and asparagine 180 contribute to the S-adenosyl-L-methionine site. 180–183 (NPPY) lines the substrate pocket.

This sequence belongs to the protein N5-glutamine methyltransferase family. PrmC subfamily.

It carries out the reaction L-glutaminyl-[peptide chain release factor] + S-adenosyl-L-methionine = N(5)-methyl-L-glutaminyl-[peptide chain release factor] + S-adenosyl-L-homocysteine + H(+). Methylates the class 1 translation termination release factors RF1/PrfA and RF2/PrfB on the glutamine residue of the universally conserved GGQ motif. The protein is Release factor glutamine methyltransferase of Xylella fastidiosa (strain 9a5c).